The chain runs to 1665 residues: Protein scribble homolog (1665 aa).

A sufficient for targeting to adherens junction and to inhibit cell proliferation region spans residues Met-1–Glu-804. Ser-37 is subject to Phosphoserine. LRR repeat units follow at residues Ser-37–Leu-58, Asn-60–Phe-81, Gln-83–Cys-104, Ala-106–Leu-127, Ser-129–Leu-150, Asn-152–Val-174, Lys-175–Pro-197, Asn-198–Leu-219, Arg-221–Ala-243, Leu-244–Leu-265, Gln-267–Cys-288, Asn-290–Thr-312, Lys-313–Cys-334, Ala-336–Thr-357, Glu-359–Asn-381, and Leu-382–Asp-402. Thr-378 carries the post-translational modification Phosphothreonine. 2 disordered regions span residues Pro-422 to Ile-615 and Arg-635 to Ser-689. Residues Gly-428 to Cys-437 are compositionally biased toward polar residues. Positions Asp-452–Ala-463 are enriched in acidic residues. A coiled-coil region spans residues Glu-455 to Thr-475. Thr-475 carries the phosphothreonine modification. 2 stretches are compositionally biased toward basic and acidic residues: residues Ser-479–Glu-494 and Phe-570–Asp-580. Ser-583 is modified (phosphoserine). Positions Arg-653 to Ala-687 form a coiled coil. Over residues Glu-657–Glu-681 the composition is skewed to acidic residues. Phosphothreonine occurs at positions 674 and 675. Residues Ser-694 and Ser-750 each carry the phosphoserine modification. The segment at Ile-703–Arg-1215 is interaction with ARHGEF7. Positions Thr-714–Arg-801 constitute a PDZ 1 domain. A required for interaction with VIM region spans residues Thr-714–Thr-1180. Thr-812 carries the phosphothreonine modification. Ser-821, Ser-861, and Ser-925 each carry phosphoserine. 3 PDZ domains span residues Ala-848–Thr-936, Glu-990–Pro-1079, and Glu-1086–Thr-1180. A phosphoserine mark is found at Ser-1126, Ser-1206, Ser-1209, Ser-1212, Ser-1218, Ser-1262, Ser-1265, and Ser-1284. Basic and acidic residues predominate over residues Ile-1213–Leu-1228. Residues Ile-1213 to Asn-1246 are disordered. 2 disordered regions span residues Ala-1263–Pro-1325 and Val-1341–Arg-1501. Residues Gly-1264–Lys-1277 are compositionally biased toward polar residues. The residue at position 1291 (Lys-1291) is an Omega-N-methylarginine. Ala-1299 carries the post-translational modification Phosphoserine. Position 1312 is an omega-N-methylarginine (Arg-1312). At Ser-1320 the chain carries Phosphoserine. Thr-1353 carries the post-translational modification Phosphothreonine. Ser-1359 carries the post-translational modification Phosphoserine. A compositionally biased stretch (basic and acidic residues) spans Ser-1364 to Val-1376. Ser-1389 carries the post-translational modification Phosphoserine. Positions Leu-1390 to Thr-1421 form a coiled coil. A compositionally biased stretch (basic and acidic residues) spans Asp-1394–Lys-1406. Phosphoserine is present on residues Ser-1455 and Ser-1458. Positions Ala-1471 to Arg-1482 are enriched in basic and acidic residues. Ser-1485, Ser-1496, and Ser-1518 each carry phosphoserine. Residues Leu-1530 to Leu-1577 form a disordered region. Basic and acidic residues predominate over residues Gln-1534–Ala-1547. The residue at position 1551 (Ser-1551) is a Phosphoserine. Thr-1555 carries the phosphothreonine modification. Residues Ser-1557, Ser-1571, and Ser-1601 each carry the phosphoserine modification. The tract at residues Gly-1632 to Ser-1665 is disordered.

This sequence belongs to the LAP (LRR and PDZ) protein family. In terms of assembly, interacts with UBE3A. Interacts with PAK1 and PAK2. Interacts (via PDZ domains) with VANGL2. Interacts (via PDZ domains) with LPP and TRIP6; the interaction is direct. Interacts (via PDZ domains) with TJP2. Interacts (via PDZ domains) with APC; may mediate APC targeting to adherens junctions of epithelial cells. Interacts (via PDZ domains) with TSHR; regulates TSHR trafficking and function. Interacts with ARHGEF7 and GIT1; interacts directly with ARHGEF7. Interacts with CTNNB1. Interacts with MAPK12. Interacts (via PDZ domains 1 and 3) with MCC. Interacts with DLG5. Interacts with STK4/MST1 and LATS1 in the presence of DLG5. Interacts (via PDZ domain 3) with CRTAM (via PDZ-binding motif); the interaction promotes CRTAM and SCRIB polarization in a subset of CD4+ T-cells. Interacts with YES1, when YES1 is in a closed conformation; the interaction facilitates YES1 autophosphorylation. Interacts (via PDZ domains) with VIM; the interaction protects SCRIB from proteasomal degradation and facilitates SCRIB localization to intermediate filaments, the interaction is reduced by cell contact inhibition. Ubiquitinated; targeted for UBE3A-dependent multiubiquitination and degraded. Post-translationally, palmitoylated. Could be depalmitoylated by LYPLA1 and/or LYPLA2. Palmitoylation of SCRIB by ZDHHC7 is required for its localization to cell-cell junctions, function in the establishement of epithelial cell polarity and the regulation of downstream signaling pathways important for epithelial cell differentiation. As to expression, expressed in CD4+ T-cells (at protein level). Found in a wide range of tissues including liver, kidney and spleen. Also expressed in the brain (at protein level).

Its subcellular location is the cell membrane. It is found in the cell junction. It localises to the adherens junction. The protein resides in the cell projection. The protein localises to the lamellipodium. Its subcellular location is the cytoplasm. It is found in the postsynapse. It localises to the presynapse. Scaffold protein involved in different aspects of polarized cell differentiation regulating epithelial and neuronal morphogenesis and T-cell polarization. Via its interaction with CRTAM, required for the late phase polarization of a subset of CD4+ T-cells, which in turn regulates TCR-mediated proliferation and IFNG and IL22 production. Plays a role in cell directional movement, cell orientation, cell sheet organization and Golgi complex polarization at the cell migration front. Promotes epithelial cell layer barrier function via maintaining cell-cell adhesion. Most probably functions in the establishment of apico-basal cell polarity. May function in cell proliferation regulating progression from G1 to S phase and as a positive regulator of apoptosis for instance during acinar morphogenesis of the mammary epithelium. May regulate cell invasion via MAPK-mediated cell migration and adhesion. May play a role in exocytosis and in the targeting of synaptic vesicles to synapses. Functions as an activator of Rac GTPase activity. The polypeptide is Protein scribble homolog (Mus musculus (Mouse)).